Consider the following 550-residue polypeptide: Acetyl-coenzyme A transporter 1 (550 aa).

The Cytoplasmic segment spans residues 1 to 74 (MSPTISHKDN…KRSYRAELSS (74 aa)). The residue at position 42 (S42) is a Phosphoserine. The helical transmembrane segment at 75 to 95 (ILLLLFLYVLQGIPLGLAGSI) threads the bilayer. Over 96-113 (PLILQSKNVSYTDQAFFS) the chain is Extracellular. The N-linked (GlcNAc...) asparagine glycan is linked to N103. A helical transmembrane segment spans residues 114–134 (FVFWPFSLKLLWAPLVDAVYF). Residues 135-141 (KNFGRRK) lie on the Cytoplasmic side of the membrane. The chain crosses the membrane as a helical span at residues 142–162 (SWLVPTQYILGIFMIYLSTQV). The Extracellular portion of the chain corresponds to 163 to 256 (DRLLGNIDGR…FQPQPRGIVT (94 aa)). Residues 257–277 (LSDFLFFWGTVFLITTTLVAL) form a helical membrane-spanning segment. The Cytoplasmic segment spans residues 278-300 (LKKETREASVVKEETQGITDTYK). A helical membrane pass occupies residues 301-321 (LLFSIIKMPAVLAFCLLILTS). The Extracellular segment spans residues 322–344 (KIGFSAADAVTGLKLVEEGVPKE). The helical transmembrane segment at 345–365 (HLALLAVPMVPLQIILPLLIS) threads the bilayer. The Cytoplasmic portion of the chain corresponds to 366-375 (KYTAGPQPLN). The helical transmembrane segment at 376 to 396 (IFYKAMPYRLLLGLEYALLVW) threads the bilayer. The Extracellular segment spans residues 397 to 405 (WTPKVEHQG). The chain crosses the membrane as a helical span at residues 406-426 (GFPIYYYIIVLLSYALHQVTL). Topologically, residues 427–509 (YSMYVSIMAF…LGGSCVTALD (83 aa)) are cytoplasmic. A helical transmembrane segment spans residues 510 to 530 (GYYVESIVCVLIGFGWWFFLG). At 531–550 (PKFKKLQDEGPSSWKCKRTN) the chain is on the extracellular side.

Belongs to the SLC33A transporter family. As to quaternary structure, homodimerizes. Expressed in brain at all developmental stages. Detected in hippocampus, hypothalamus, cerebellum, cortex, olfactory bulb, and the ventral and dorsal anterior olfactory nucleus.

Its subcellular location is the endoplasmic reticulum membrane. The catalysed reaction is acetyl-CoA(in) = acetyl-CoA(out). Its function is as follows. Acetyl-CoA transporter that mediates active acetyl-CoA import through the endoplasmic reticulum (ER) membrane into the ER lumen where specific ER-based acetyl-CoA:lysine acetyltransferases are responsible for the acetylation of ER-based protein substrates, such as BACE1. Necessary for O-acetylation of gangliosides. The sequence is that of Acetyl-coenzyme A transporter 1 (Slc33a1) from Rattus norvegicus (Rat).